Here is a 336-residue protein sequence, read N- to C-terminus: Lipoyl synthase (336 aa).

The [4Fe-4S] cluster site is built by Cys81, Cys86, Cys92, Cys107, Cys111, Cys114, and Ser323. Residues 93–312 (FGHGTATFMI…EDYGYELGFS (220 aa)) form the Radical SAM core domain.

Belongs to the radical SAM superfamily. Lipoyl synthase family. It depends on [4Fe-4S] cluster as a cofactor.

Its subcellular location is the cytoplasm. It carries out the reaction [[Fe-S] cluster scaffold protein carrying a second [4Fe-4S](2+) cluster] + N(6)-octanoyl-L-lysyl-[protein] + 2 oxidized [2Fe-2S]-[ferredoxin] + 2 S-adenosyl-L-methionine + 4 H(+) = [[Fe-S] cluster scaffold protein] + N(6)-[(R)-dihydrolipoyl]-L-lysyl-[protein] + 4 Fe(3+) + 2 hydrogen sulfide + 2 5'-deoxyadenosine + 2 L-methionine + 2 reduced [2Fe-2S]-[ferredoxin]. Its pathway is protein modification; protein lipoylation via endogenous pathway; protein N(6)-(lipoyl)lysine from octanoyl-[acyl-carrier-protein]: step 2/2. Its function is as follows. Catalyzes the radical-mediated insertion of two sulfur atoms into the C-6 and C-8 positions of the octanoyl moiety bound to the lipoyl domains of lipoate-dependent enzymes, thereby converting the octanoylated domains into lipoylated derivatives. In Stenotrophomonas maltophilia (strain K279a), this protein is Lipoyl synthase.